Reading from the N-terminus, the 307-residue chain is Acetaldehyde dehydrogenase 2 (307 aa).

The Acyl-thioester intermediate role is filled by C131. Residues 162–170 and N273 contribute to the NAD(+) site; that span reads SVGPGTRKN.

Belongs to the acetaldehyde dehydrogenase family.

It carries out the reaction acetaldehyde + NAD(+) + CoA = acetyl-CoA + NADH + H(+). The polypeptide is Acetaldehyde dehydrogenase 2 (aphF) (Comamonas testosteroni (Pseudomonas testosteroni)).